The primary structure comprises 383 residues: Nuclear hormone receptor family member nhr-217 (383 aa).

A DNA-binding region (nuclear receptor) is located at residues 53 to 127 (IPACPVCDVP…AGLQRDYVRQ (75 aa)). NR C4-type zinc fingers lie at residues 56–77 (CPVC…CAAC) and 93–109 (CKRE…CRAC). Positions 172-383 (ILKVSNSSLF…KLYVQIGIPF (212 aa)) constitute an NR LBD domain.

The protein belongs to the nuclear hormone receptor family.

It is found in the nucleus. Its function is as follows. Orphan nuclear receptor. The chain is Nuclear hormone receptor family member nhr-217 (nhr-217) from Caenorhabditis elegans.